A 233-amino-acid chain; its full sequence is Fibrillarin-like rRNA/tRNA 2'-O-methyltransferase (233 aa).

Residues 90–91, 109–110, 134–135, and 154–157 contribute to the S-adenosyl-L-methionine site; these read TT, EF, DA, and DVAQ.

Belongs to the methyltransferase superfamily. Fibrillarin family. As to quaternary structure, interacts with nop5. Component of box C/D small ribonucleoprotein (sRNP) particles that contain rpl7ae, FlpA and nop5, plus a guide RNA.

In terms of biological role, involved in pre-rRNA and tRNA processing. Utilizes the methyl donor S-adenosyl-L-methionine to catalyze the site-specific 2'-hydroxyl methylation of ribose moieties in rRNA and tRNA. Site specificity is provided by a guide RNA that base pairs with the substrate. Methylation occurs at a characteristic distance from the sequence involved in base pairing with the guide RNA. This is Fibrillarin-like rRNA/tRNA 2'-O-methyltransferase from Aeropyrum pernix (strain ATCC 700893 / DSM 11879 / JCM 9820 / NBRC 100138 / K1).